The sequence spans 172 residues: 3-hydroxydecanoyl-[acyl-carrier-protein] dehydratase (172 aa).

His-70 is a catalytic residue.

Belongs to the thioester dehydratase family. FabA subfamily. Homodimer.

The protein localises to the cytoplasm. It carries out the reaction a (3R)-hydroxyacyl-[ACP] = a (2E)-enoyl-[ACP] + H2O. It catalyses the reaction (3R)-hydroxydecanoyl-[ACP] = (2E)-decenoyl-[ACP] + H2O. The enzyme catalyses (2E)-decenoyl-[ACP] = (3Z)-decenoyl-[ACP]. It functions in the pathway lipid metabolism; fatty acid biosynthesis. Functionally, necessary for the introduction of cis unsaturation into fatty acids. Catalyzes the dehydration of (3R)-3-hydroxydecanoyl-ACP to E-(2)-decenoyl-ACP and then its isomerization to Z-(3)-decenoyl-ACP. Can catalyze the dehydratase reaction for beta-hydroxyacyl-ACPs with saturated chain lengths up to 16:0, being most active on intermediate chain length. The chain is 3-hydroxydecanoyl-[acyl-carrier-protein] dehydratase from Xylella fastidiosa (strain M12).